An 87-amino-acid polypeptide reads, in one-letter code: Putative regulatory protein BCG9842_B1272 (87 aa).

This sequence belongs to the RemA family.

This chain is Putative regulatory protein BCG9842_B1272, found in Bacillus cereus (strain G9842).